A 403-amino-acid chain; its full sequence is MIDYTQYPDARGHFGIHGGRFVSETLMAALEDLENLYNRMKNDEQFLAEFDRDLAYYVGRPSPLYYAERWSKKLGGAQIYLKREDLNHTGSHKVNNTIGQALLAKLSGKKRIIAETGAGQHGVATATIAARLGLECVVFMGAEDVKRQAMNVYRMRLLGATVIPVQSGSKTLKDAMNEAMRDWVTNVDSTYYVIGTVAGPHPYPQLVRDFQSIIGREARRQIQEQAGRLPDALVACVGGGSNAIGLFYPFLNDQDVKMYGVEAAGHGIETGKHSAPLNAGHVGVLHGNRTYLMSDPQGQIIETHSISAGLDYPGVGPEHSFLKDMHRVEYVPIDDNEALQGFRDLTRIEGIIPAIESAHAMAYVTKLAPTMDKDQIIIANVSGRGDKDLMTVARIDGIEMVEM.

An N6-(pyridoxal phosphate)lysine modification is found at Lys-93.

This sequence belongs to the TrpB family. Tetramer of two alpha and two beta chains. Pyridoxal 5'-phosphate is required as a cofactor.

It catalyses the reaction (1S,2R)-1-C-(indol-3-yl)glycerol 3-phosphate + L-serine = D-glyceraldehyde 3-phosphate + L-tryptophan + H2O. The protein operates within amino-acid biosynthesis; L-tryptophan biosynthesis; L-tryptophan from chorismate: step 5/5. Functionally, the beta subunit is responsible for the synthesis of L-tryptophan from indole and L-serine. This is Tryptophan synthase beta chain from Acinetobacter baylyi (strain ATCC 33305 / BD413 / ADP1).